The primary structure comprises 155 residues: Small ribosomal subunit protein uS7cz/uS7cy (155 aa).

This sequence belongs to the universal ribosomal protein uS7 family. In terms of assembly, part of the 30S ribosomal subunit.

It is found in the plastid. The protein localises to the chloroplast. In terms of biological role, one of the primary rRNA binding proteins, it binds directly to 16S rRNA where it nucleates assembly of the head domain of the 30S subunit. This chain is Small ribosomal subunit protein uS7cz/uS7cy (rps7-A), found in Atropa belladonna (Belladonna).